The chain runs to 212 residues: Thymidylate kinase (212 aa).

11–18 is a binding site for ATP; that stretch reads GLEGAGKT.

Belongs to the thymidylate kinase family.

It catalyses the reaction dTMP + ATP = dTDP + ADP. In terms of biological role, phosphorylation of dTMP to form dTDP in both de novo and salvage pathways of dTTP synthesis. This chain is Thymidylate kinase (tmk), found in Buchnera aphidicola subsp. Acyrthosiphon pisum (strain APS) (Acyrthosiphon pisum symbiotic bacterium).